We begin with the raw amino-acid sequence, 584 residues long: Alpha-glucosidase MAL32 (584 aa).

D214 (nucleophile) is an active-site residue. Residue E276 is the Proton donor of the active site.

It belongs to the glycosyl hydrolase 13 family.

It catalyses the reaction Hydrolysis of terminal, non-reducing (1-&gt;4)-linked alpha-D-glucose residues with release of alpha-D-glucose.. The sequence is that of Alpha-glucosidase MAL32 (MAL32) from Saccharomyces cerevisiae (strain ATCC 204508 / S288c) (Baker's yeast).